Consider the following 877-residue polypeptide: Translation initiation factor IF-2 (877 aa).

Residues 48–289 (SSFQNSAPAE…QITKRKERPL (242 aa)) form a disordered region. Residues 78–89 (RKNEKKPEENNT) show a composition bias toward basic and acidic residues. Residues 92-101 (KSNRRRNNKR) show a composition bias toward basic residues. The segment covering 102–116 (RSSDRARDNKERDAK) has biased composition (basic and acidic residues). Residues 123–132 (KAAALLQQFK) show a composition bias toward low complexity. 2 stretches are compositionally biased toward basic and acidic residues: residues 135 to 155 (QRAEEGQLNREAQKAKKEYHE) and 162 to 189 (KEQSEKDNKKTVKESNNKKVEQQVEKKV). The segment covering 277–286 (PRKQITKRKE) has biased composition (basic residues). In terms of domain architecture, tr-type G spans 378 to 547 (KRPPVVTIMG…LLQADVMELK (170 aa)). Residues 387–394 (GHVDHGKT) are G1. 387–394 (GHVDHGKT) contributes to the GTP binding site. Residues 412–416 (GITQR) form a G2 region. A G3 region spans residues 433-436 (DTPG). Residues 433 to 437 (DTPGH) and 487 to 490 (NKMD) each bind GTP. The segment at 487 to 490 (NKMD) is G4. The segment at 523-525 (SAK) is G5.

It belongs to the TRAFAC class translation factor GTPase superfamily. Classic translation factor GTPase family. IF-2 subfamily.

The protein resides in the cytoplasm. One of the essential components for the initiation of protein synthesis. Protects formylmethionyl-tRNA from spontaneous hydrolysis and promotes its binding to the 30S ribosomal subunits. Also involved in the hydrolysis of GTP during the formation of the 70S ribosomal complex. In Lactobacillus acidophilus (strain ATCC 700396 / NCK56 / N2 / NCFM), this protein is Translation initiation factor IF-2.